The sequence spans 319 residues: Cobalamin biosynthesis protein CobD (319 aa).

A run of 3 helical transmembrane segments spans residues 54 to 76 (VLLLLTVLLIVTALSLALVWLSY), 154 to 173 (GVTAPLFYALIGGAPLALLY), and 301 to 318 (VLGFLVFLFLLGGFIYAI).

This sequence belongs to the CobD/CbiB family.

Its subcellular location is the cell membrane. Its pathway is cofactor biosynthesis; adenosylcobalamin biosynthesis. Functionally, converts cobyric acid to cobinamide by the addition of aminopropanol on the F carboxylic group. The polypeptide is Cobalamin biosynthesis protein CobD (Halalkalibacterium halodurans (strain ATCC BAA-125 / DSM 18197 / FERM 7344 / JCM 9153 / C-125) (Bacillus halodurans)).